The following is a 171-amino-acid chain: uncharacterized protein (171 aa).

This is an uncharacterized protein from Caenorhabditis elegans.